The chain runs to 610 residues: UvrABC system protein C (610 aa).

Residues 16–94 form the GIY-YIG domain; the sequence is SQPGVYRMYD…IKLYQPRYNV (79 aa). The 36-residue stretch at 204-239 folds into the UVR domain; the sequence is DQVLTQLIARMEKASQDLAFEEAARIRDQIQAVRRV.

The protein belongs to the UvrC family. Interacts with UvrB in an incision complex.

Its subcellular location is the cytoplasm. Functionally, the UvrABC repair system catalyzes the recognition and processing of DNA lesions. UvrC both incises the 5' and 3' sides of the lesion. The N-terminal half is responsible for the 3' incision and the C-terminal half is responsible for the 5' incision. This is UvrABC system protein C from Salmonella agona (strain SL483).